The primary structure comprises 140 residues: Lysozyme B (140 aa).

The signal sequence occupies residues 1-18; it reads MKAFIVLVALALAAPALG. A C-type lysozyme domain is found at 19 to 140; that stretch reads RTMDRCSLAR…GWLPSIDDCF (122 aa). 4 disulfides stabilise this stretch: cysteine 24/cysteine 139, cysteine 45/cysteine 129, cysteine 80/cysteine 96, and cysteine 92/cysteine 110. Residues glutamate 50 and aspartate 68 contribute to the active site.

This sequence belongs to the glycosyl hydrolase 22 family. Found in the midgut.

The enzyme catalyses Hydrolysis of (1-&gt;4)-beta-linkages between N-acetylmuramic acid and N-acetyl-D-glucosamine residues in a peptidoglycan and between N-acetyl-D-glucosamine residues in chitodextrins.. Unlikely to play an active role in the humoral immune defense. May have a function in the digestion of bacteria in the food. This chain is Lysozyme B (LysB), found in Drosophila melanogaster (Fruit fly).